The sequence spans 176 residues: ATP-dependent protease subunit HslV (176 aa).

Residue Thr-5 is part of the active site. Residues Ser-161, Cys-164, and Thr-167 each coordinate Na(+).

It belongs to the peptidase T1B family. HslV subfamily. As to quaternary structure, a double ring-shaped homohexamer of HslV is capped on each side by a ring-shaped HslU homohexamer. The assembly of the HslU/HslV complex is dependent on binding of ATP.

It is found in the cytoplasm. It catalyses the reaction ATP-dependent cleavage of peptide bonds with broad specificity.. Allosterically activated by HslU binding. Protease subunit of a proteasome-like degradation complex believed to be a general protein degrading machinery. The polypeptide is ATP-dependent protease subunit HslV (Thermoanaerobacter pseudethanolicus (strain ATCC 33223 / 39E) (Clostridium thermohydrosulfuricum)).